The sequence spans 172 residues: 3-hydroxydecanoyl-[acyl-carrier-protein] dehydratase (172 aa).

Histidine 71 is a catalytic residue.

Belongs to the thioester dehydratase family. FabA subfamily. Homodimer.

Its subcellular location is the cytoplasm. The enzyme catalyses a (3R)-hydroxyacyl-[ACP] = a (2E)-enoyl-[ACP] + H2O. It catalyses the reaction (3R)-hydroxydecanoyl-[ACP] = (2E)-decenoyl-[ACP] + H2O. The catalysed reaction is (2E)-decenoyl-[ACP] = (3Z)-decenoyl-[ACP]. It functions in the pathway lipid metabolism; fatty acid biosynthesis. In terms of biological role, necessary for the introduction of cis unsaturation into fatty acids. Catalyzes the dehydration of (3R)-3-hydroxydecanoyl-ACP to E-(2)-decenoyl-ACP and then its isomerization to Z-(3)-decenoyl-ACP. Can catalyze the dehydratase reaction for beta-hydroxyacyl-ACPs with saturated chain lengths up to 16:0, being most active on intermediate chain length. The protein is 3-hydroxydecanoyl-[acyl-carrier-protein] dehydratase of Brucella anthropi (strain ATCC 49188 / DSM 6882 / CCUG 24695 / JCM 21032 / LMG 3331 / NBRC 15819 / NCTC 12168 / Alc 37) (Ochrobactrum anthropi).